We begin with the raw amino-acid sequence, 338 residues long: Glycerol-3-phosphate dehydrogenase [NAD(P)+] (338 aa).

Residues S18, Y19, H39, and K113 each contribute to the NADPH site. Sn-glycerol 3-phosphate-binding residues include K113, G142, and T144. Position 146 (A146) interacts with NADPH. The sn-glycerol 3-phosphate site is built by K198, D251, S261, R262, and N263. K198 acts as the Proton acceptor in catalysis. Residue R262 coordinates NADPH. Residues V286 and E288 each contribute to the NADPH site.

Belongs to the NAD-dependent glycerol-3-phosphate dehydrogenase family.

The protein resides in the cytoplasm. It catalyses the reaction sn-glycerol 3-phosphate + NAD(+) = dihydroxyacetone phosphate + NADH + H(+). The enzyme catalyses sn-glycerol 3-phosphate + NADP(+) = dihydroxyacetone phosphate + NADPH + H(+). Its pathway is membrane lipid metabolism; glycerophospholipid metabolism. In terms of biological role, catalyzes the reduction of the glycolytic intermediate dihydroxyacetone phosphate (DHAP) to sn-glycerol 3-phosphate (G3P), the key precursor for phospholipid synthesis. This is Glycerol-3-phosphate dehydrogenase [NAD(P)+] from Photobacterium profundum (strain SS9).